Reading from the N-terminus, the 98-residue chain is Large ribosomal subunit protein uL23 (98 aa).

It belongs to the universal ribosomal protein uL23 family. Part of the 50S ribosomal subunit. Contacts protein L29, and trigger factor when it is bound to the ribosome.

One of the early assembly proteins it binds 23S rRNA. One of the proteins that surrounds the polypeptide exit tunnel on the outside of the ribosome. Forms the main docking site for trigger factor binding to the ribosome. The sequence is that of Large ribosomal subunit protein uL23 from Streptococcus pyogenes serotype M1.